A 525-amino-acid polypeptide reads, in one-letter code: G-protein regulator 1 (525 aa).

The GoLoco domain occupies 424-445; that stretch reads PVDMMDLIFSMSSRMDDQRTEL. Residues 488–525 are disordered; that stretch reads HTMNRILKRSKKSKSSLDSTNSMQGDDTRSDDVTMTSK.

Interacts with gpr-1, lin-5 and GDP-bound goa-1.

It localises to the cytoplasm. The protein resides in the cell cortex. It is found in the cytoskeleton. Its subcellular location is the spindle. In the 1-cell embryo, probably together with gpr-2, controls nuclear rotation and spindle elongation during mitosis. Complex of gpr-1 and gpr-2, in association with lin-5, activates G-protein signaling to affect mitotic spindle force. Polarity determinants (par genes) may regulate lin-5/gpr-1/gpr-2/goa-1 locally to create the asymmetric forces that drive spindle movement. The polypeptide is G-protein regulator 1 (gpr-1) (Caenorhabditis elegans).